The sequence spans 207 residues: Nucleoplasmin-2 (207 aa).

The span at 1–15 (MSRHSTSSVTETTAK) shows a compositional bias: polar residues. Disordered stretches follow at residues 1-20 (MSRH…MLWG) and 121-207 (DLTW…VTKK). Residues 123-147 (TWEDDEEEEEEEEEEDEDEDADISL) are compositionally biased toward acidic residues. Residues 129-152 (EEEEEEEEEDEDEDADISLEEIPV) are acidic tract A2. Residues 165–180 (SIAKKKKVEKEEDETV) carry the Bipartite nuclear localization signal motif. The segment covering 198–207 (PRAKKPVTKK) has biased composition (basic residues).

Belongs to the nucleoplasmin family. As to quaternary structure, homopentamer, when bound to H2A-H2B dimers only. Homodecamer of two stacked pentamers, when bound to H2A-H2B dimers and H3-H4 tetramers simultaneously. Ovary specific.

It localises to the nucleus. In terms of biological role, core histones chaperone involved in chromatin reprogramming, specially during fertilization and early embryonic development. Probably involved in sperm DNA decondensation during fertilization. This chain is Nucleoplasmin-2 (Npm2), found in Mus musculus (Mouse).